Consider the following 429-residue polypeptide: Enolase (429 aa).

Residue Q165 coordinates (2R)-2-phosphoglycerate. E207 functions as the Proton donor in the catalytic mechanism. Residues D244, E287, and D314 each coordinate Mg(2+). Residues K339, R368, S369, and K390 each coordinate (2R)-2-phosphoglycerate. K339 acts as the Proton acceptor in catalysis.

It belongs to the enolase family. Mg(2+) is required as a cofactor.

The protein resides in the cytoplasm. It localises to the secreted. The protein localises to the cell surface. The enzyme catalyses (2R)-2-phosphoglycerate = phosphoenolpyruvate + H2O. Its pathway is carbohydrate degradation; glycolysis; pyruvate from D-glyceraldehyde 3-phosphate: step 4/5. Functionally, catalyzes the reversible conversion of 2-phosphoglycerate (2-PG) into phosphoenolpyruvate (PEP). It is essential for the degradation of carbohydrates via glycolysis. The polypeptide is Enolase (Roseiflexus sp. (strain RS-1)).